Consider the following 210-residue polypeptide: Thiamine-phosphate synthase 2 (210 aa).

Residues 38–42 and D70 contribute to the 4-amino-2-methyl-5-(diphosphooxymethyl)pyrimidine site; that span reads QLREK. Mg(2+) contacts are provided by D71 and E90. T109 serves as a coordination point for 4-amino-2-methyl-5-(diphosphooxymethyl)pyrimidine. Position 135 to 137 (135 to 137) interacts with 2-[(2R,5Z)-2-carboxy-4-methylthiazol-5(2H)-ylidene]ethyl phosphate; sequence TTT. Residue K138 coordinates 4-amino-2-methyl-5-(diphosphooxymethyl)pyrimidine. G165 serves as a coordination point for 2-[(2R,5Z)-2-carboxy-4-methylthiazol-5(2H)-ylidene]ethyl phosphate.

It belongs to the thiamine-phosphate synthase family. Requires Mg(2+) as cofactor.

It carries out the reaction 2-[(2R,5Z)-2-carboxy-4-methylthiazol-5(2H)-ylidene]ethyl phosphate + 4-amino-2-methyl-5-(diphosphooxymethyl)pyrimidine + 2 H(+) = thiamine phosphate + CO2 + diphosphate. The catalysed reaction is 2-(2-carboxy-4-methylthiazol-5-yl)ethyl phosphate + 4-amino-2-methyl-5-(diphosphooxymethyl)pyrimidine + 2 H(+) = thiamine phosphate + CO2 + diphosphate. It catalyses the reaction 4-methyl-5-(2-phosphooxyethyl)-thiazole + 4-amino-2-methyl-5-(diphosphooxymethyl)pyrimidine + H(+) = thiamine phosphate + diphosphate. Its pathway is cofactor biosynthesis; thiamine diphosphate biosynthesis; thiamine phosphate from 4-amino-2-methyl-5-diphosphomethylpyrimidine and 4-methyl-5-(2-phosphoethyl)-thiazole: step 1/1. Its function is as follows. Condenses 4-methyl-5-(beta-hydroxyethyl)thiazole monophosphate (THZ-P) and 2-methyl-4-amino-5-hydroxymethyl pyrimidine pyrophosphate (HMP-PP) to form thiamine monophosphate (TMP). This Streptococcus pneumoniae serotype 4 (strain ATCC BAA-334 / TIGR4) protein is Thiamine-phosphate synthase 2.